A 147-amino-acid polypeptide reads, in one-letter code: Hemoglobin subunit gamma (147 aa).

The 145-residue stretch at 3–147 (HFTAEEKAAI…VATALAHKYH (145 aa)) folds into the Globin domain. Positions 64 and 93 each coordinate heme b.

The protein belongs to the globin family. Heterotetramer of two alpha chains and two gamma chains. In terms of tissue distribution, red blood cells.

Its function is as follows. This protein functions as an embryonic globin, but the gene structure and chromosomal location resemble more closely the human gamma chain gene, which codes for a fetal globin. The protein is Hemoglobin subunit gamma (HBG) of Oryctolagus cuniculus (Rabbit).